The sequence spans 1178 residues: Pyruvate carboxylase, mitochondrial (1178 aa).

Residues 1–20 (MLKFQTVRGGLRLLGVRRSS) constitute a mitochondrion transit peptide. Ser21 is subject to Phosphoserine. N6-acetyllysine occurs at positions 35 and 39. The Biotin carboxylation domain occupies 36–486 (PIKKVMVANR…DTQFIDENPE (451 aa)). Lys79 bears the N6-acetyllysine; alternate mark. Lys79 is subject to N6-succinyllysine; alternate. An N6-acetyllysine mark is found at Lys148 and Lys152. Positions 152 and 236 each coordinate ATP. Residues 156 to 353 (RAIAIAAGVP…LVHAQIHVSE (198 aa)) enclose the ATP-grasp domain. Position 241 is an N6-acetyllysine (Lys241). His271 serves as a coordination point for ATP. Lys297, Lys316, and Lys319 each carry N6-acetyllysine. Arg328 is an active-site residue. An N6-acetyllysine modification is found at Lys434. Residue Lys442 is modified to N6-succinyllysine. Residues 563–832 (LLLMDTTFRD…DTEVPLERVF (270 aa)) form the Pyruvate carboxyltransferase domain. 571–575 (RDAHQ) is a substrate binding site. Asp572 is a binding site for Mn(2+). Lys589 carries the post-translational modification N6-acetyllysine. Arg644 lines the substrate pocket. Lys661 and Lys717 each carry N6-acetyllysine. Residue Lys741 participates in Mn(2+) binding. Position 741 is an N6-carboxylysine (Lys741). Lys748 carries the N6-acetyllysine modification. Residues His771 and His773 each coordinate Mn(2+). N6-acetyllysine is present on Lys892. Thr908 contacts substrate. An N6-acetyllysine modification is found at Lys969. Position 988 is an N6-acetyllysine; alternate (Lys988). Position 988 is an N6-succinyllysine; alternate (Lys988). Position 992 is an N6-acetyllysine (Lys992). Position 1003 is a phosphothreonine (Thr1003). Lys1061, Lys1090, and Lys1124 each carry N6-acetyllysine. Residues 1109 to 1178 (KGQIGAPMPG…EGDDLILEIE (70 aa)) enclose the Biotinyl-binding domain. Lys1144 carries the post-translational modification N6-biotinyllysine.

In terms of assembly, homotetramer. Interacts (via the biotin carboxylation domain) with SIRT4. Biotin is required as a cofactor. The cofactor is Mn(2+). In terms of processing, acetylation of Lys-316 is observed in liver mitochondria from fasted mice but not from fed mice. Acetylation of Lys-748 might play a role in catalytic activity regulation. Liver, kidney, adipose tissue, liver and brain.

It localises to the mitochondrion matrix. It catalyses the reaction hydrogencarbonate + pyruvate + ATP = oxaloacetate + ADP + phosphate + H(+). Its pathway is carbohydrate biosynthesis; gluconeogenesis. Its function is as follows. Pyruvate carboxylase catalyzes a 2-step reaction, involving the ATP-dependent carboxylation of the covalently attached biotin in the first step and the transfer of the carboxyl group to pyruvate in the second. Catalyzes in a tissue specific manner, the initial reactions of glucose (liver, kidney) and lipid (adipose tissue, liver, brain) synthesis from pyruvate. This chain is Pyruvate carboxylase, mitochondrial (Pc), found in Mus musculus (Mouse).